The chain runs to 248 residues: Aliphatic sulfonates import ATP-binding protein SsuB 2 (248 aa).

The 217-residue stretch at 14–230 folds into the ABC transporter domain; the sequence is VRVESLVRSF…DHGHRRFGEI (217 aa). 46 to 53 is a binding site for ATP; it reads GRSGSGKS.

It belongs to the ABC transporter superfamily. Aliphatic sulfonates importer (TC 3.A.1.17.2) family. The complex is composed of two ATP-binding proteins (SsuB), two transmembrane proteins (SsuC) and a solute-binding protein (SsuA).

The protein localises to the cell inner membrane. The enzyme catalyses ATP + H2O + aliphatic sulfonate-[sulfonate-binding protein]Side 1 = ADP + phosphate + aliphatic sulfonateSide 2 + [sulfonate-binding protein]Side 1.. Functionally, part of the ABC transporter complex SsuABC involved in aliphatic sulfonates import. Responsible for energy coupling to the transport system. The chain is Aliphatic sulfonates import ATP-binding protein SsuB 2 from Mesorhizobium japonicum (strain LMG 29417 / CECT 9101 / MAFF 303099) (Mesorhizobium loti (strain MAFF 303099)).